A 1055-amino-acid polypeptide reads, in one-letter code: MQETFKFLRCNSQGEAVEDKYSLETLKNHFVVRDEYNNLFRVFSNRDDFWEWEAAQPFEQKCFHEVVFGFLPQRLKFDIDFPVNKSYSDDNDNVNDDDSVYDDDNVYDILDMIINVIMDVFYETYSLPYNINLTREQILLTDSIGLNKKRELKYSFHIILYTYSVLNNNEAKAFTSKVLENLPKHVYPFVDPQVNKSIQNFRIIGSHKKGSMRVKMFNEELAEVFETSTTTKKSDTLIATPFETTCLPCIFTNVKETTPSSCDTIQQSELEEVLKFAGTLCKNHCFLRVHKNLVLFKRTSPSYCEICKRMHDKDNTLILRVTGNKVYQHCRHDNKHSLLMGSLSGTTNFVETYVDQVMTKSIEVHESILFEELPDTQKHIYDESSMREYERVPTLVVKAQMKIGKTVQLRNYLQKYYGNNSISKQQTIRFVTFRQIFSKNIQSRLPNFTLYSEVTGDLDSYERVIVQVESLFRLTSTAEPVDLLILDEVESIFNQFNSGLHKYFAPSFAIFMWMLETANYVICLDANLGNRTYNILQRFRGDVPIFFHWNQYKRAQHDTYYFTSSRETWLNNLLKDLLEDKKIVIPTNSLMEARLLQSFIQKKFPEKKIGFYSSKSTAHERESHFNNVSYYWGLVDILIYTPTISAGVSYEDKRFDVLYGFFNNMSCDVETCCQMLGRVRELKSKCYKICLQGKQNYYPETIEDIEMFTLQKRDTLFQTINNHQLSFTYSKETGRPVYYKTPYYHLWLETMRIQHLSKNHFITRFINQVADTGAKVFILTGEKLETVKQYTSIKMEIKHQDYVNIASAETIDANKALQIKQNLKEGITVDQQDLFAYEKYKLLEFYAWHGHKITPKFVEQYNSFMTKQNYTGRVQISRGKTVYESLTMLQTQELNFHQWAMQHAEHHDLQFNYSFQSHMYAIMLLTKCGFKCVQDPNILTNEQLMTKLVDEFVQYDLSAVSFEFKLKKPSKTDPQTILKFINKVLGLRYGLKIHHNKGNYYIKNTKAGSLIPFVRQQIKQSPCVVSNLLPITETSSVKEETLTETSPIKETFTET.

Belongs to the asfivirus F1055L family.

May be involved in DNA replication. This Ornithodoros (relapsing fever ticks) protein is Putative helicase/primase complex protein.